A 124-amino-acid polypeptide reads, in one-letter code: Small ribosomal subunit protein uS13 (124 aa).

A disordered region spans residues 95-124; that stretch reads GLPVRGQRTRHNARTRKGPRKTVGAKKGKR. Positions 101–124 are enriched in basic residues; that stretch reads QRTRHNARTRKGPRKTVGAKKGKR.

Belongs to the universal ribosomal protein uS13 family. In terms of assembly, part of the 30S ribosomal subunit. Forms a loose heterodimer with protein S19. Forms two bridges to the 50S subunit in the 70S ribosome.

Its function is as follows. Located at the top of the head of the 30S subunit, it contacts several helices of the 16S rRNA. In the 70S ribosome it contacts the 23S rRNA (bridge B1a) and protein L5 of the 50S subunit (bridge B1b), connecting the 2 subunits; these bridges are implicated in subunit movement. Contacts the tRNAs in the A and P-sites. This chain is Small ribosomal subunit protein uS13, found in Coprothermobacter proteolyticus (strain ATCC 35245 / DSM 5265 / OCM 4 / BT).